A 521-amino-acid chain; its full sequence is NAD(P)H-quinone oxidoreductase subunit 2 (521 aa).

A run of 14 helical transmembrane segments spans residues 15 to 35 (ILPE…DITF), 42 to 62 (WTPY…YTQW), 79 to 99 (LSIV…LMSV), 109 to 126 (IGEF…AMFL), 131 to 153 (ELVM…TGYM), 167 to 187 (LLIG…LYGL), 208 to 228 (LALV…IAAV), 242 to 262 (PTPV…ALAI), 276 to 296 (WQFI…VVAI), 304 to 324 (MLAY…VIGT), 332 to 352 (VFYL…VILF), 376 to 396 (LALS…GFFG), 398 to 418 (LYLF…LGLI), and 464 to 484 (VGLV…NPLL).

Belongs to the complex I subunit 2 family. In terms of assembly, NDH-1 can be composed of about 15 different subunits; different subcomplexes with different compositions have been identified which probably have different functions.

Its subcellular location is the cellular thylakoid membrane. The enzyme catalyses a plastoquinone + NADH + (n+1) H(+)(in) = a plastoquinol + NAD(+) + n H(+)(out). It catalyses the reaction a plastoquinone + NADPH + (n+1) H(+)(in) = a plastoquinol + NADP(+) + n H(+)(out). NDH-1 shuttles electrons from an unknown electron donor, via FMN and iron-sulfur (Fe-S) centers, to quinones in the respiratory and/or the photosynthetic chain. The immediate electron acceptor for the enzyme in this species is believed to be plastoquinone. Couples the redox reaction to proton translocation, and thus conserves the redox energy in a proton gradient. Cyanobacterial NDH-1 also plays a role in inorganic carbon-concentration. The protein is NAD(P)H-quinone oxidoreductase subunit 2 of Acaryochloris marina (strain MBIC 11017).